The following is a 721-amino-acid chain: S-adenosyl-L-methionine-dependent tRNA 4-demethylwyosine synthase TYW1 (721 aa).

Residues 71-229 (VKIFYGSQTG…DFTAWKTKFI (159 aa)) form the Flavodoxin-like domain. FMN is bound by residues 77 to 81 (SQTGT) and 168 to 200 (VFGL…QRVL). 2 disordered regions span residues 242–291 (ACGG…ELGT) and 305–339 (DLGN…TEDG). A compositionally biased stretch (basic and acidic residues) spans 250–274 (GKCESAQHGPGEARPHPQGELHPGD). A compositionally biased stretch (acidic residues) spans 275 to 290 (AEEEEPCESSSEDELG). Residues 313 to 325 (VKREKREKSHQDG) are compositionally biased toward basic and acidic residues. The Radical SAM core domain maps to 389-635 (YGIESHRCME…LLPDYEVACE (247 aa)). The [4Fe-4S] cluster site is built by Cys-405, Cys-409, and Cys-412.

Belongs to the TYW1 family. The cofactor is [4Fe-4S] cluster.

The catalysed reaction is N(1)-methylguanosine(37) in tRNA(Phe) + pyruvate + S-adenosyl-L-methionine = 4-demethylwyosine(37) in tRNA(Phe) + 5'-deoxyadenosine + L-methionine + CO2 + H2O. It functions in the pathway tRNA modification; wybutosine-tRNA(Phe) biosynthesis. Its function is as follows. Probable component of the wybutosine biosynthesis pathway. Wybutosine is a hyper modified guanosine with a tricyclic base found at the 3'-position adjacent to the anticodon of eukaryotic phenylalanine tRNA. Catalyzes the condensation of N-methylguanine with 2 carbon atoms from pyruvate to form the tricyclic 4-demethylwyosine, an intermediate in wybutosine biosynthesis. The protein is S-adenosyl-L-methionine-dependent tRNA 4-demethylwyosine synthase TYW1 (Tyw1) of Mus musculus (Mouse).